The chain runs to 390 residues: Neuromedin-B receptor (390 aa).

Over 1 to 44 (MPPKSLSNLSQTAGVNQSGFFPGASERDFLPATDRTTAEFVIRC) the chain is Extracellular. N8 and N16 each carry an N-linked (GlcNAc...) asparagine glycan. A helical transmembrane segment spans residues 45-65 (VIPSLYLLIITVGLLGNIVLV). The Cytoplasmic portion of the chain corresponds to 66–76 (KIFLTNSAMRS). Residues 77-97 (VPNIFISNLAAGDVLLLLTCV) traverse the membrane as a helical segment. Residues 98 to 117 (PVDASRYFLDEWMFGKVGCK) lie on the Extracellular side of the membrane. Cysteines 116 and 198 form a disulfide. The helical transmembrane segment at 118–138 (LIPVIQLTSVGVSVFTLTALS) threads the bilayer. The Cytoplasmic portion of the chain corresponds to 139 to 155 (ADRYRAIVNPMDIQTSG). A helical membrane pass occupies residues 156–176 (AVLWTCVKAGGIWVVSVLLAV). The Extracellular segment spans residues 177 to 210 (PEAVFSEVARIDGLDNGSFTACIPYPQTDELHPK). N-linked (GlcNAc...) asparagine glycosylation occurs at N192. The helical transmembrane segment at 211–231 (IHSVLIFLVYFLIPLGIISVY) threads the bilayer. Residues 232-266 (YYHIAKTLIKSAHNLPGEYNEHTKKQMETRKRLAK) lie on the Cytoplasmic side of the membrane. The helical transmembrane segment at 267–287 (IVLVFVGCFVFCWFPNHILYM) threads the bilayer. Residues 288–305 (YRSFNYNEIDPSLGHMIV) lie on the Extracellular side of the membrane. Residues 306–328 (TLVARVLSFCNSCVNPFALYLLS) traverse the membrane as a helical segment. At 329-390 (ESFRKHFNNQ…GHSVKQEMAL (62 aa)) the chain is on the cytoplasmic side. C341 carries the S-palmitoyl cysteine lipid modification. S352 is subject to Phosphoserine.

The protein belongs to the G-protein coupled receptor 1 family. As to expression, highly expressed in peripheral tissues where it is detected in the respiratory system, circulatory system, digestive system, urogenital system, lymphatic organs and endocrine system (at protein level). In the testis, expressed mainly in Leydig cells (at protein level).

It localises to the cell membrane. Receptor for neuromedin-B. Contributes to the maintenance of basal sigh rate through signaling in the pre-Botzinger complex, a cluster of several thousand neurons in the ventrolateral medulla responsible for inspiration during respiratory activity. Contributes to the induction of sneezing following exposure to chemical irritants or allergens which causes release of NMB by nasal sensory neurons and activation of NMBR-expressing neurons in the sneeze-evoking region of the brainstem. These in turn activate neurons of the caudal ventral respiratory group, giving rise to the sneezing response. Contributes to induction of acute itch, possibly through its activation on dorsal root ganglion neurons by the NMB peptide. Plays a role in the innate immune response to influenza A virus infection by enhancing interferon alpha expression and reducing expression of IL6. Plays a role in CSF1-induced proliferation of osteoclast precursors by contributing to the positive regulation of the expression of the CSF1 receptor CSF1R. This Sus scrofa (Pig) protein is Neuromedin-B receptor (NMBR).